The chain runs to 293 residues: Phosphatidylserine decarboxylase proenzyme (293 aa).

Active-site charge relay system; for autoendoproteolytic cleavage activity residues include aspartate 90, histidine 147, and serine 254. Serine 254 (schiff-base intermediate with substrate; via pyruvic acid; for decarboxylase activity) is an active-site residue. Serine 254 carries the post-translational modification Pyruvic acid (Ser); by autocatalysis.

This sequence belongs to the phosphatidylserine decarboxylase family. PSD-B subfamily. Prokaryotic type I sub-subfamily. Heterodimer of a large membrane-associated beta subunit and a small pyruvoyl-containing alpha subunit. Pyruvate serves as cofactor. Is synthesized initially as an inactive proenzyme. Formation of the active enzyme involves a self-maturation process in which the active site pyruvoyl group is generated from an internal serine residue via an autocatalytic post-translational modification. Two non-identical subunits are generated from the proenzyme in this reaction, and the pyruvate is formed at the N-terminus of the alpha chain, which is derived from the carboxyl end of the proenzyme. The autoendoproteolytic cleavage occurs by a canonical serine protease mechanism, in which the side chain hydroxyl group of the serine supplies its oxygen atom to form the C-terminus of the beta chain, while the remainder of the serine residue undergoes an oxidative deamination to produce ammonia and the pyruvoyl prosthetic group on the alpha chain. During this reaction, the Ser that is part of the protease active site of the proenzyme becomes the pyruvoyl prosthetic group, which constitutes an essential element of the active site of the mature decarboxylase.

Its subcellular location is the cell membrane. The enzyme catalyses a 1,2-diacyl-sn-glycero-3-phospho-L-serine + H(+) = a 1,2-diacyl-sn-glycero-3-phosphoethanolamine + CO2. The protein operates within phospholipid metabolism; phosphatidylethanolamine biosynthesis; phosphatidylethanolamine from CDP-diacylglycerol: step 2/2. Catalyzes the formation of phosphatidylethanolamine (PtdEtn) from phosphatidylserine (PtdSer). The chain is Phosphatidylserine decarboxylase proenzyme from Yersinia pseudotuberculosis serotype O:1b (strain IP 31758).